Consider the following 392-residue polypeptide: Extracellular metalloproteinase 4 (392 aa).

Positions 1–9 (VHSVVDYVS) are excised as a propeptide. N-linked (GlcNAc...) asparagine glycosylation occurs at N176. H193 contributes to the Zn(2+) binding site. E194 is an active-site residue. H197 contacts Zn(2+). N359 and N385 each carry an N-linked (GlcNAc...) asparagine glycan.

The protein belongs to the peptidase M36 family. The cofactor is Zn(2+).

The protein resides in the secreted. Secreted metalloproteinase probably acting as a virulence factor. The sequence is that of Extracellular metalloproteinase 4 (MEP4) from Trichophyton soudanense.